The following is a 227-amino-acid chain: Phosphoglycolate phosphatase (227 aa).

Asp14 serves as the catalytic Nucleophile. 3 residues coordinate Mg(2+): Asp14, Asp16, and Asp177.

Belongs to the HAD-like hydrolase superfamily. CbbY/CbbZ/Gph/YieH family. Requires Mg(2+) as cofactor.

It carries out the reaction 2-phosphoglycolate + H2O = glycolate + phosphate. It functions in the pathway organic acid metabolism; glycolate biosynthesis; glycolate from 2-phosphoglycolate: step 1/1. Specifically catalyzes the dephosphorylation of 2-phosphoglycolate. Is involved in the dissimilation of the intracellular 2-phosphoglycolate formed during the DNA repair of 3'-phosphoglycolate ends, a major class of DNA lesions induced by oxidative stress. The sequence is that of Phosphoglycolate phosphatase from Thiobacillus denitrificans (strain ATCC 25259 / T1).